The following is a 608-amino-acid chain: MPSFDSKAFLKSVTHQPGVYRMYNAEADVIYVGKAKDLKKRLSSYFRSNVPSEKTKALVSHIHQVDVTVTHSETEALILEHNYIKQYLPKYNVLLRDDKSYPYIFISQHKHPRISIHRGVKRKKGEYFGPYPDSGAVRESLHLIQKLFPIRQCEDSVYANRHRPCLMHQIGRCLAPCVKGIVSDEEYKEQTDFIRLFLQGKDRQVIQTLVKQMESASQSLNFEKAAIIRDQIQAMRRVQEQQYVSDDSGDDLDVLGFAIENGLACVHLLMIRQGKILGSRSFFPKIPANTDKEEVFLSFLTQYYLNHTQGRTIPNRVVTSFEFNSEDLERALTELSGRKVIFQLNPKGIKGRYLKLADTNALTALTSKSNHKLTMYQRFKQLEEALVLSSIQRMECFDISHTMGEKTVASCVVFNQEGPVKSEYRRYNIAGITGGDDYAAMAQVLERRYSKQLDIDKIPDIIFIDGGKGQLNRAYEVISKHWEDWPKQPLLLGIAKGVTRKHGLETLVKISGEEFSMPSDSPALHLIQHIRDESHNHAIGGHRAQRAKVRKTSTLQNIDGVGPKRRQALLQYLGGLQELKSASVEEIAKVPGISHSLAEKIHDALKHG.

Residues 15–93 enclose the GIY-YIG domain; that stretch reads HQPGVYRMYN…IKQYLPKYNV (79 aa). A UVR domain is found at 203-238; that stretch reads RQVIQTLVKQMESASQSLNFEKAAIIRDQIQAMRRV.

Belongs to the UvrC family. In terms of assembly, interacts with UvrB in an incision complex.

It localises to the cytoplasm. In terms of biological role, the UvrABC repair system catalyzes the recognition and processing of DNA lesions. UvrC both incises the 5' and 3' sides of the lesion. The N-terminal half is responsible for the 3' incision and the C-terminal half is responsible for the 5' incision. This chain is UvrABC system protein C, found in Aliivibrio fischeri (strain ATCC 700601 / ES114) (Vibrio fischeri).